A 211-amino-acid polypeptide reads, in one-letter code: Ribosomal RNA small subunit methyltransferase G (211 aa).

S-adenosyl-L-methionine contacts are provided by residues Gly73, 126-127 (IE), and Arg142.

It belongs to the methyltransferase superfamily. RNA methyltransferase RsmG family.

Its subcellular location is the cytoplasm. It catalyses the reaction guanosine(527) in 16S rRNA + S-adenosyl-L-methionine = N(7)-methylguanosine(527) in 16S rRNA + S-adenosyl-L-homocysteine. Specifically methylates the N7 position of guanine in position 527 of 16S rRNA. The chain is Ribosomal RNA small subunit methyltransferase G from Methylorubrum populi (strain ATCC BAA-705 / NCIMB 13946 / BJ001) (Methylobacterium populi).